The following is a 179-amino-acid chain: Replication restart protein DnaT (179 aa).

The tract at residues 156 to 179 (GGLPKRDVNTVSEPDSQIPPGFRG) is disordered.

This sequence belongs to the DnaT family. Homooligomerizes. Interacts with PriB. Component of the replication restart primosome. Primosome assembly occurs via a 'hand-off' mechanism. PriA binds to replication forks, subsequently PriB then DnaT bind; DnaT then displaces ssDNA to generate the helicase loading substrate.

Its function is as follows. Involved in the restart of stalled replication forks, which reloads the replicative helicase on sites other than the origin of replication. Can function in multiple replication restart pathways. Displaces ssDNA from a PriB-ssDNA complex. Probably forms a spiral filament on ssDNA. This chain is Replication restart protein DnaT, found in Escherichia coli O17:K52:H18 (strain UMN026 / ExPEC).